The chain runs to 716 residues: ATP-dependent DNA helicase DinG (716 aa).

Residues Ala-17–Thr-294 enclose the Helicase ATP-binding domain. Ala-54–Thr-61 is an ATP binding site. [4Fe-4S] cluster is bound at residue Cys-120. A DEAH box motif is present at residues Glu-131–Gln-134. [4Fe-4S] cluster-binding residues include Cys-194, Cys-199, and Cys-205. The DEAH box motif lies at Asp-248–His-251. The 182-residue stretch at His-517–Pro-698 folds into the Helicase C-terminal domain.

It belongs to the helicase family. DinG subfamily. Type 1 sub-subfamily. The cofactor is [4Fe-4S] cluster.

The enzyme catalyses Couples ATP hydrolysis with the unwinding of duplex DNA at the replication fork by translocating in the 5'-3' direction. This creates two antiparallel DNA single strands (ssDNA). The leading ssDNA polymer is the template for DNA polymerase III holoenzyme which synthesizes a continuous strand.. It carries out the reaction ATP + H2O = ADP + phosphate + H(+). DNA-dependent ATPase and 5'-3' DNA helicase. Unwinds D-loops, R-loops, forked DNA and G-quadruplex DNA. The polypeptide is ATP-dependent DNA helicase DinG (Escherichia coli O6:H1 (strain CFT073 / ATCC 700928 / UPEC)).